The chain runs to 118 residues: 5-hydroxyisourate hydrolase (118 aa).

Substrate contacts are provided by His7, Arg46, and Tyr115.

This sequence belongs to the transthyretin family. 5-hydroxyisourate hydrolase subfamily. In terms of assembly, homotetramer.

It catalyses the reaction 5-hydroxyisourate + H2O = 5-hydroxy-2-oxo-4-ureido-2,5-dihydro-1H-imidazole-5-carboxylate + H(+). In terms of biological role, catalyzes the hydrolysis of 5-hydroxyisourate (HIU) to 2-oxo-4-hydroxy-4-carboxy-5-ureidoimidazoline (OHCU). In Brucella melitensis biotype 1 (strain ATCC 23456 / CCUG 17765 / NCTC 10094 / 16M), this protein is 5-hydroxyisourate hydrolase.